Consider the following 331-residue polypeptide: Biotin synthase (331 aa).

The region spanning phenylalanine 52–arginine 281 is the Radical SAM core domain. 3 residues coordinate [4Fe-4S] cluster: cysteine 70, cysteine 74, and cysteine 77. Residues cysteine 114, cysteine 146, cysteine 206, and arginine 276 each coordinate [2Fe-2S] cluster.

This sequence belongs to the radical SAM superfamily. Biotin synthase family. Homodimer. It depends on [4Fe-4S] cluster as a cofactor. The cofactor is [2Fe-2S] cluster.

The enzyme catalyses (4R,5S)-dethiobiotin + (sulfur carrier)-SH + 2 reduced [2Fe-2S]-[ferredoxin] + 2 S-adenosyl-L-methionine = (sulfur carrier)-H + biotin + 2 5'-deoxyadenosine + 2 L-methionine + 2 oxidized [2Fe-2S]-[ferredoxin]. The protein operates within cofactor biosynthesis; biotin biosynthesis; biotin from 7,8-diaminononanoate: step 2/2. Catalyzes the conversion of dethiobiotin (DTB) to biotin by the insertion of a sulfur atom into dethiobiotin via a radical-based mechanism. This chain is Biotin synthase, found in Bacillus pumilus (strain SAFR-032).